The primary structure comprises 505 residues: Ribosomal RNA small subunit methyltransferase F (505 aa).

Residues alanine 123–lysine 129, glutamate 147, aspartate 174, and aspartate 192 each bind S-adenosyl-L-methionine. Cysteine 245 acts as the Nucleophile in catalysis. A disordered region spans residues glycine 409–arginine 437. Over residues threonine 410 to asparagine 435 the composition is skewed to low complexity.

Belongs to the class I-like SAM-binding methyltransferase superfamily. RsmB/NOP family.

It is found in the cytoplasm. The catalysed reaction is cytidine(1407) in 16S rRNA + S-adenosyl-L-methionine = 5-methylcytidine(1407) in 16S rRNA + S-adenosyl-L-homocysteine + H(+). Functionally, specifically methylates the cytosine at position 1407 (m5C1407) of 16S rRNA. This chain is Ribosomal RNA small subunit methyltransferase F, found in Shewanella denitrificans (strain OS217 / ATCC BAA-1090 / DSM 15013).